Here is a 438-residue protein sequence, read N- to C-terminus: Tol-Pal system protein TolB (438 aa).

An N-terminal signal peptide occupies residues 1–36; it reads MTPAFRRADLTGFLRTYGAALILLLAAMLAWQPAQA.

It belongs to the TolB family. In terms of assembly, the Tol-Pal system is composed of five core proteins: the inner membrane proteins TolA, TolQ and TolR, the periplasmic protein TolB and the outer membrane protein Pal. They form a network linking the inner and outer membranes and the peptidoglycan layer.

It localises to the periplasm. Its function is as follows. Part of the Tol-Pal system, which plays a role in outer membrane invagination during cell division and is important for maintaining outer membrane integrity. This is Tol-Pal system protein TolB from Bordetella pertussis (strain Tohama I / ATCC BAA-589 / NCTC 13251).